A 205-amino-acid polypeptide reads, in one-letter code: Outer-membrane lipoprotein LolB (205 aa).

The first 17 residues, 1–17 (MFLRHVIVFSLIALLTG), serve as a signal peptide directing secretion. Residue Cys18 is the site of N-palmitoyl cysteine attachment. Cys18 carries S-diacylglycerol cysteine lipidation.

Belongs to the LolB family. As to quaternary structure, monomer.

The protein localises to the cell outer membrane. In terms of biological role, plays a critical role in the incorporation of lipoproteins in the outer membrane after they are released by the LolA protein. In Pseudomonas syringae pv. syringae (strain B728a), this protein is Outer-membrane lipoprotein LolB.